Here is a 206-residue protein sequence, read N- to C-terminus: Large ribosomal subunit protein uL3 (206 aa).

Residues 116-149 form a disordered region; the sequence is GFQGAIKRHNQSRGPMSHGSRYHRRPGSMGPVAP.

The protein belongs to the universal ribosomal protein uL3 family. In terms of assembly, part of the 50S ribosomal subunit. Forms a cluster with proteins L14 and L19.

One of the primary rRNA binding proteins, it binds directly near the 3'-end of the 23S rRNA, where it nucleates assembly of the 50S subunit. This is Large ribosomal subunit protein uL3 from Shouchella clausii (strain KSM-K16) (Alkalihalobacillus clausii).